A 955-amino-acid polypeptide reads, in one-letter code: Coiled-coil domain-containing protein 146 (955 aa).

A compositionally biased stretch (acidic residues) spans 1-17; it reads MEDSSTDTEKEEEEEKD. A disordered region spans residues 1-22; it reads MEDSSTDTEKEEEEEKDEKDQE. Coiled-coil stretches lie at residues 114-141, 169-321, 400-461, 534-640, and 667-832; these read EAFSTEVSKMREQLLKYQNEYNAVKERE, GEME…AREN, STLS…LLRM, KAHQ…RNES, and NGEI…MKQA.

Interacts with CCDC38 and CCDC42. Interacts with intraflagellar transport proteins IFT20 and IFT88. In terms of assembly, (Microbial infection) Interacts with Chlamydia trachomatis incM/YT288. In host cells infected with C.trachomatis incM, CCDC146 is recruited to the periphery of the pathogen-containing vacuole but recruitment is not dependent on incM. As to expression, widely expressed.

Its subcellular location is the cytoplasm. The protein resides in the cytoskeleton. It is found in the microtubule organizing center. It localises to the centrosome. The protein localises to the centriole. Its subcellular location is the flagellum axoneme. The protein resides in the cilium basal body. It is found in the midbody. Functionally, essential for sperm flagellum biogenesis and male fertility. The protein is Coiled-coil domain-containing protein 146 (CCDC146) of Homo sapiens (Human).